The chain runs to 432 residues: WD repeat-containing protein 18 (432 aa).

6 WD repeats span residues 36–75 (GGQA…QLQQ), 78–116 (MCPG…LLVI), 119–158 (RHYQ…QADP), 170–211 (HHAL…LLLS), 213–257 (LFDV…SFHP), and 267–306 (GHRN…CIRT).

It belongs to the WD repeat IPI3/WDR18 family. As to quaternary structure, component of the 5FMC complex, at least composed of PELP1, LAS1L, TEX10, WDR18 and SENP3; the complex interacts with methylated CHTOP and ZNF148. Interacts with NOL9. Component of the PELP1 complex, composed of at least PELP1, TEX10 and WDR18. The complex interacts with pre-60S ribosome particles.

It is found in the nucleus. It localises to the nucleolus. Its subcellular location is the nucleoplasm. The protein resides in the cytoplasm. The protein localises to the dynein axonemal particle. Functionally, functions as a component of the Five Friends of Methylated CHTOP (5FMC) complex; the 5FMC complex is recruited to ZNF148 by methylated CHTOP, leading to desumoylation of ZNF148 and subsequent transactivation of ZNF148 target genes. Component of the PELP1 complex involved in the nucleolar steps of 28S rRNA maturation and the subsequent nucleoplasmic transit of the pre-60S ribosomal subunit. May play a role during development. The polypeptide is WD repeat-containing protein 18 (WDR18) (Homo sapiens (Human)).